The sequence spans 25 residues: ATP synthase subunit alpha, mitochondrial (25 aa).

Belongs to the ATPase alpha/beta chains family. F-type ATPases have 2 components, CF(1) - the catalytic core - and CF(0) - the membrane proton channel. CF(1) has five subunits: alpha(3), beta(3), gamma(1), delta(1), epsilon(1). CF(0) has three main subunits: a, b and c.

The protein resides in the mitochondrion. The protein localises to the mitochondrion inner membrane. Mitochondrial membrane ATP synthase (F(1)F(0) ATP synthase or Complex V) produces ATP from ADP in the presence of a proton gradient across the membrane which is generated by electron transport complexes of the respiratory chain. F-type ATPases consist of two structural domains, F(1) - containing the extramembraneous catalytic core, and F(0) - containing the membrane proton channel, linked together by a central stalk and a peripheral stalk. During catalysis, ATP synthesis in the catalytic domain of F(1) is coupled via a rotary mechanism of the central stalk subunits to proton translocation. Subunits alpha and beta form the catalytic core in F(1). Rotation of the central stalk against the surrounding alpha(3)beta(3) subunits leads to hydrolysis of ATP in three separate catalytic sites on the beta subunits. Subunit alpha does not bear the catalytic high-affinity ATP-binding sites. This chain is ATP synthase subunit alpha, mitochondrial (ATPA), found in Spinacia oleracea (Spinach).